The sequence spans 150 residues: PTTG1IP family member 2 (150 aa).

The N-terminal stretch at methionine 1–alanine 19 is a signal peptide. Residues leucine 20–aspartate 98 lie on the Extracellular side of the membrane. Asparagine 26 carries an N-linked (GlcNAc...) asparagine glycan. A helical membrane pass occupies residues leucine 99 to cysteine 119. Topologically, residues leucine 120–tryptophan 150 are cytoplasmic.

It is found in the membrane. This is PTTG1IP family member 2 from Mus musculus (Mouse).